Here is a 260-residue protein sequence, read N- to C-terminus: Thiazole synthase (260 aa).

Lys-96 (schiff-base intermediate with DXP) is an active-site residue. 1-deoxy-D-xylulose 5-phosphate contacts are provided by residues Gly-157, 184–185, and 206–207; these read AG and NT.

The protein belongs to the ThiG family. In terms of assembly, homotetramer. Forms heterodimers with either ThiH or ThiS.

Its subcellular location is the cytoplasm. It catalyses the reaction [ThiS sulfur-carrier protein]-C-terminal-Gly-aminoethanethioate + 2-iminoacetate + 1-deoxy-D-xylulose 5-phosphate = [ThiS sulfur-carrier protein]-C-terminal Gly-Gly + 2-[(2R,5Z)-2-carboxy-4-methylthiazol-5(2H)-ylidene]ethyl phosphate + 2 H2O + H(+). It participates in cofactor biosynthesis; thiamine diphosphate biosynthesis. Its function is as follows. Catalyzes the rearrangement of 1-deoxy-D-xylulose 5-phosphate (DXP) to produce the thiazole phosphate moiety of thiamine. Sulfur is provided by the thiocarboxylate moiety of the carrier protein ThiS. In vitro, sulfur can be provided by H(2)S. The chain is Thiazole synthase from Bradyrhizobium sp. (strain BTAi1 / ATCC BAA-1182).